We begin with the raw amino-acid sequence, 181 residues long: Alkyl hydroperoxide reductase AhpD (181 aa).

The active-site Proton donor is Cys-131. A disulfide bridge links Cys-131 with Cys-134. The active-site Cysteine sulfenic acid (-SOH) intermediate is Cys-134.

Belongs to the AhpD family.

The catalysed reaction is N(6)-[(R)-dihydrolipoyl]-L-lysyl-[lipoyl-carrier protein] + a hydroperoxide = N(6)-[(R)-lipoyl]-L-lysyl-[lipoyl-carrier protein] + an alcohol + H2O. In terms of biological role, antioxidant protein with alkyl hydroperoxidase activity. Required for the reduction of the AhpC active site cysteine residues and for the regeneration of the AhpC enzyme activity. This Bradyrhizobium sp. (strain BTAi1 / ATCC BAA-1182) protein is Alkyl hydroperoxide reductase AhpD.